The sequence spans 449 residues: NADH-quinone oxidoreductase subunit H (449 aa).

A run of 9 helical transmembrane segments spans residues 26-46 (FWLI…MTLF), 96-116 (PIFI…FAVI), 136-156 (LPVS…GLIL), 177-197 (IISY…YAGT), 211-231 (WYIA…GETN), 259-279 (FFFL…TTLF), 298-318 (WVPL…FIWL), 330-350 (FMAF…LVIA), and 365-385 (WLIG…LDPG). Residues 396–449 (AERRKLAEAPSLESIPWPPPPPGGAHHRPAVPAGTSANGSSTVIPADPPPRQES) form a disordered region.

It belongs to the complex I subunit 1 family. As to quaternary structure, NDH-1 is composed of 14 different subunits. Subunits NuoA, H, J, K, L, M, N constitute the membrane sector of the complex.

Its subcellular location is the cell membrane. The catalysed reaction is a quinone + NADH + 5 H(+)(in) = a quinol + NAD(+) + 4 H(+)(out). In terms of biological role, NDH-1 shuttles electrons from NADH, via FMN and iron-sulfur (Fe-S) centers, to quinones in the respiratory chain. The immediate electron acceptor for the enzyme in this species is believed to be ubiquinone. Couples the redox reaction to proton translocation (for every two electrons transferred, four hydrogen ions are translocated across the cytoplasmic membrane), and thus conserves the redox energy in a proton gradient. This subunit may bind ubiquinone. The protein is NADH-quinone oxidoreductase subunit H of Frankia alni (strain DSM 45986 / CECT 9034 / ACN14a).